The chain runs to 486 residues: Small ribosomal subunit protein uS17B (486 aa).

The 30S ribosomal protein S17 stretch occupies residues 1–112 (MRDIGINGIK…IENKSNINFV (112 aa)). The segment at 113 to 486 (DNLLNVDDKW…ELWTRKNYKS (374 aa)) is unknown.

It belongs to the universal ribosomal protein uS17 family. In terms of assembly, part of the 30S ribosomal subunit.

Functionally, one of the primary rRNA binding proteins, it binds specifically to the 5'-end of 16S ribosomal RNA. This chain is Small ribosomal subunit protein uS17B, found in Methanosarcina acetivorans (strain ATCC 35395 / DSM 2834 / JCM 12185 / C2A).